The sequence spans 110 residues: MAPRGCIVAVFAIFCISRLLCSHGAPVAPMTPYLMLCQPHKRCGDKFYDPLQHCCYDDAVVPLARTQTCGNCTFRVCFEQCCPWTFMVKLINQNCDSARTSDDRLCRSVS.

The signal sequence occupies residues 1–24 (MAPRGCIVAVFAIFCISRLLCSHG). N-linked (GlcNAc...) asparagine glycosylation occurs at N71.

The protein belongs to the IGFL family. As to quaternary structure, homodimer; disulfide-linked. As to expression, detected in ovary and spinal cord.

It is found in the secreted. Probable ligand of the IGFLR1 cell membrane receptor. This is Insulin growth factor-like family member 1 (IGFL1) from Homo sapiens (Human).